Consider the following 386-residue polypeptide: Zinc finger CCCH domain-containing protein 2 (386 aa).

2 consecutive C3H1-type zinc fingers follow at residues 116-143 (HYSGTACPDFRKGGCKRGDACEYAHGVF) and 151-175 (RYRTQPCKDGTACRRRVCFFAHTPD). Disordered stretches follow at residues 180 to 200 (LPAQQSSPRSVASSPLAESYD) and 220 to 252 (SSPTSTLMSPPKSPPSESPPLSPDGAAAIRRGS). Residues 182 to 192 (AQQSSPRSVAS) are compositionally biased toward polar residues. A compositionally biased stretch (low complexity) spans 220-229 (SSPTSTLMSP). Positions 230–241 (PKSPPSESPPLS) are enriched in pro residues.

It localises to the nucleus. Functionally, involved in leaf senescence delay. May repress jasmonic acid (JA) signaling role in promoting leaf senescence. May regulate panicle development and pollination/fertilization process. The sequence is that of Zinc finger CCCH domain-containing protein 2 from Oryza sativa subsp. japonica (Rice).